The chain runs to 351 residues: Glycerol-3-phosphate dehydrogenase [NAD(P)+] (351 aa).

Positions 12, 13, 33, and 114 each coordinate NADPH. Residues K114, G145, and S147 each contribute to the sn-glycerol 3-phosphate site. A149 is a binding site for NADPH. Positions 200, 253, 263, 264, and 265 each coordinate sn-glycerol 3-phosphate. K200 (proton acceptor) is an active-site residue. R264 contributes to the NADPH binding site. Positions 288 and 290 each coordinate NADPH.

Belongs to the NAD-dependent glycerol-3-phosphate dehydrogenase family.

The protein resides in the cytoplasm. It carries out the reaction sn-glycerol 3-phosphate + NAD(+) = dihydroxyacetone phosphate + NADH + H(+). It catalyses the reaction sn-glycerol 3-phosphate + NADP(+) = dihydroxyacetone phosphate + NADPH + H(+). Its pathway is membrane lipid metabolism; glycerophospholipid metabolism. Functionally, catalyzes the reduction of the glycolytic intermediate dihydroxyacetone phosphate (DHAP) to sn-glycerol 3-phosphate (G3P), the key precursor for phospholipid synthesis. The protein is Glycerol-3-phosphate dehydrogenase [NAD(P)+] of Lacticaseibacillus casei (strain BL23) (Lactobacillus casei).